Consider the following 192-residue polypeptide: Anthranilate synthase component 2 (192 aa).

One can recognise a Glutamine amidotransferase type-1 domain in the interval 1-192 (MIVLVNNRDS…KNFVEMSRNG (192 aa)). Residue 50-52 (GPG) coordinates L-glutamine. Catalysis depends on cysteine 78, which acts as the Nucleophile; for GATase activity. L-glutamine contacts are provided by residues glutamine 82 and 127–128 (SL). Active-site for GATase activity residues include histidine 165 and glutamate 167.

As to quaternary structure, heterotetramer consisting of two non-identical subunits: a beta subunit (TrpG) and a large alpha subunit (TrpE).

The enzyme catalyses chorismate + L-glutamine = anthranilate + pyruvate + L-glutamate + H(+). It participates in amino-acid biosynthesis; L-tryptophan biosynthesis; L-tryptophan from chorismate: step 1/5. Functionally, part of a heterotetrameric complex that catalyzes the two-step biosynthesis of anthranilate, an intermediate in the biosynthesis of L-tryptophan. In the first step, the glutamine-binding beta subunit (TrpG) of anthranilate synthase (AS) provides the glutamine amidotransferase activity which generates ammonia as a substrate that, along with chorismate, is used in the second step, catalyzed by the large alpha subunit of AS (TrpE) to produce anthranilate. In the absence of TrpG, TrpE can synthesize anthranilate directly from chorismate and high concentrations of ammonia. This chain is Anthranilate synthase component 2 (trpG), found in Thermococcus kodakarensis (strain ATCC BAA-918 / JCM 12380 / KOD1) (Pyrococcus kodakaraensis (strain KOD1)).